A 205-amino-acid polypeptide reads, in one-letter code: High frequency lysogenization protein HflD homolog (205 aa).

It belongs to the HflD family.

The protein localises to the cytoplasm. Its subcellular location is the cell inner membrane. The chain is High frequency lysogenization protein HflD homolog from Shewanella baltica (strain OS155 / ATCC BAA-1091).